Here is a 544-residue protein sequence, read N- to C-terminus: MTPTELKRLYRIIKVQLEYGLDDLLPDHQLAKAPRWMRKSLFWLKNQHPEKPLGDRLRLALQELGPVWIKFGQMLSTRRDLFPPHIADPLALLQDQVSPFDGALAKAQMEQALGGPLETWFSDFDLVPLASASIAQVHTAKLKTTNQEVVLKVIRPDIRPIIDADLKLMRRMASIVAKAMPEARRLKPIEVVREYEKTLLDELDLRREAANAIQLRRNFTDSEELYVPEVYPDFSNETVMVSERIYGIQVSDITGLKANGTNMKLLAERGVSVFFTQVFRDSFFHADMHPGNVFVNPEHPENPQWIGLDCGIVGTLNSEDKRYLAENFLAFFNRDYRRVAELHVDSGWVPADTNIDEFEFAIRIVCEPIFAKPLCEISFGHVLLNLFNTARRFNMEVQPQLVLLQKTLLYVEGLGRQLYPQLDLWETAKPFLEEWMMNQVGPKALINAIKDRAPYWAEKLPELPELLYDSLKQGKAMNQRMDQLYQGYRASKRQQATGKFLFGVGATLVVCSAILVDHTYEQLSLATAIAGVTFWLFSWRAYRR.

A Protein kinase domain is found at 123-501; that stretch reads DFDLVPLASA…KRQQATGKFL (379 aa). ATP-binding positions include 129–137 and Lys-152; that span reads LASASIAQV. Asp-287 (proton acceptor) is an active-site residue. Transmembrane regions (helical) follow at residues 496-516 and 519-539; these read ATGK…AILV and TYEQ…LFSW.

The protein belongs to the ABC1 family. UbiB subfamily.

The protein localises to the cell inner membrane. It participates in cofactor biosynthesis; ubiquinone biosynthesis [regulation]. Its function is as follows. Is probably a protein kinase regulator of UbiI activity which is involved in aerobic coenzyme Q (ubiquinone) biosynthesis. This Vibrio vulnificus (strain YJ016) protein is Probable protein kinase UbiB.